A 216-amino-acid polypeptide reads, in one-letter code: uncharacterized protein (216 aa).

This is an uncharacterized protein from Archaeoglobus fulgidus (strain ATCC 49558 / DSM 4304 / JCM 9628 / NBRC 100126 / VC-16).